We begin with the raw amino-acid sequence, 99 residues long: DNA-binding protein Fis (99 aa).

Residues 75–94 (QTRAANMLGINRGTLRKKLK) constitute a DNA-binding region (H-T-H motif).

It belongs to the transcriptional regulatory Fis family. As to quaternary structure, homodimer.

Its function is as follows. Activates ribosomal RNA transcription. Plays a direct role in upstream activation of rRNA promoters. This Haemophilus influenzae (strain PittEE) protein is DNA-binding protein Fis.